Reading from the N-terminus, the 391-residue chain is Glycerol-3-phosphate dehydrogenase [NAD(+)] 1 (391 aa).

Residues 41 to 46 (GSGNWG), phenylalanine 129, lysine 152, and alanine 185 each bind NAD(+). Lysine 152 is a substrate binding site. The active-site Proton acceptor is lysine 245. 2 residues coordinate NAD(+): arginine 310 and glutamine 339. Substrate is bound at residue 310 to 311 (RN).

The protein belongs to the NAD-dependent glycerol-3-phosphate dehydrogenase family.

It localises to the cytoplasm. It catalyses the reaction sn-glycerol 3-phosphate + NAD(+) = dihydroxyacetone phosphate + NADH + H(+). The polypeptide is Glycerol-3-phosphate dehydrogenase [NAD(+)] 1 (GPD1) (Saccharomyces uvarum (Yeast)).